Here is a 286-residue protein sequence, read N- to C-terminus: Phosphate import ATP-binding protein PstB (286 aa).

Positions 40–281 (VVARDFSIYY…PKDSMTEDYI (242 aa)) constitute an ABC transporter domain. 72 to 79 (GPSGCGKS) serves as a coordination point for ATP.

Belongs to the ABC transporter superfamily. Phosphate importer (TC 3.A.1.7) family. As to quaternary structure, the complex is composed of two ATP-binding proteins (PstB), two transmembrane proteins (PstC and PstA) and a solute-binding protein (PstS).

Its subcellular location is the cell inner membrane. It catalyses the reaction phosphate(out) + ATP + H2O = ADP + 2 phosphate(in) + H(+). Functionally, part of the ABC transporter complex PstSACB involved in phosphate import. Responsible for energy coupling to the transport system. This Chlorobaculum tepidum (strain ATCC 49652 / DSM 12025 / NBRC 103806 / TLS) (Chlorobium tepidum) protein is Phosphate import ATP-binding protein PstB.